The following is a 249-amino-acid chain: Ubiquinone biosynthesis O-methyltransferase (249 aa).

Residues Arg-41, Gly-72, Asp-93, and Met-136 each contribute to the S-adenosyl-L-methionine site.

This sequence belongs to the methyltransferase superfamily. UbiG/COQ3 family.

It catalyses the reaction a 3-demethylubiquinol + S-adenosyl-L-methionine = a ubiquinol + S-adenosyl-L-homocysteine + H(+). It carries out the reaction a 3-(all-trans-polyprenyl)benzene-1,2-diol + S-adenosyl-L-methionine = a 2-methoxy-6-(all-trans-polyprenyl)phenol + S-adenosyl-L-homocysteine + H(+). Its pathway is cofactor biosynthesis; ubiquinone biosynthesis. In terms of biological role, O-methyltransferase that catalyzes the 2 O-methylation steps in the ubiquinone biosynthetic pathway. The protein is Ubiquinone biosynthesis O-methyltransferase of Mesorhizobium japonicum (strain LMG 29417 / CECT 9101 / MAFF 303099) (Mesorhizobium loti (strain MAFF 303099)).